Consider the following 184-residue polypeptide: Photosystem I assembly protein Ycf4 (184 aa).

A run of 2 helical transmembrane segments spans residues 19–39 and 57–77; these read ISNFCWAFILFLGSLGFVLVG and ILFFPQGIVMSFYGIAGLFIS.

It belongs to the Ycf4 family.

It is found in the plastid. The protein localises to the chloroplast thylakoid membrane. In terms of biological role, seems to be required for the assembly of the photosystem I complex. The polypeptide is Photosystem I assembly protein Ycf4 (Eucalyptus globulus subsp. globulus (Tasmanian blue gum)).